The chain runs to 349 residues: 4-hydroxy-3-methylbut-2-en-1-yl diphosphate synthase (flavodoxin) (349 aa).

Residues cysteine 265, cysteine 268, cysteine 300, and glutamate 307 each contribute to the [4Fe-4S] cluster site.

Belongs to the IspG family. It depends on [4Fe-4S] cluster as a cofactor.

The catalysed reaction is (2E)-4-hydroxy-3-methylbut-2-enyl diphosphate + oxidized [flavodoxin] + H2O + 2 H(+) = 2-C-methyl-D-erythritol 2,4-cyclic diphosphate + reduced [flavodoxin]. It functions in the pathway isoprenoid biosynthesis; isopentenyl diphosphate biosynthesis via DXP pathway; isopentenyl diphosphate from 1-deoxy-D-xylulose 5-phosphate: step 5/6. Its function is as follows. Converts 2C-methyl-D-erythritol 2,4-cyclodiphosphate (ME-2,4cPP) into 1-hydroxy-2-methyl-2-(E)-butenyl 4-diphosphate. The polypeptide is 4-hydroxy-3-methylbut-2-en-1-yl diphosphate synthase (flavodoxin) (Thermodesulfovibrio yellowstonii (strain ATCC 51303 / DSM 11347 / YP87)).